Consider the following 79-residue polypeptide: Acyl carrier protein (79 aa).

Positions 2-77 constitute a Carrier domain; the sequence is SDVLERVRKI…DAVKFIQERL (76 aa). An O-(pantetheine 4'-phosphoryl)serine modification is found at Ser-37.

The protein belongs to the acyl carrier protein (ACP) family. 4'-phosphopantetheine is transferred from CoA to a specific serine of apo-ACP by AcpS. This modification is essential for activity because fatty acids are bound in thioester linkage to the sulfhydryl of the prosthetic group.

The protein localises to the cytoplasm. It participates in lipid metabolism; fatty acid biosynthesis. In terms of biological role, carrier of the growing fatty acid chain in fatty acid biosynthesis. In Phenylobacterium zucineum (strain HLK1), this protein is Acyl carrier protein.